Consider the following 552-residue polypeptide: Probable protein kinase UbiB (552 aa).

Residues 22–42 (LLPANLPLAATLLLLPFKLFP) traverse the membrane as a helical segment. The 381-residue stretch at 118–498 (SFNIEPLASA…QQLARQRNRR (381 aa)) folds into the Protein kinase domain. ATP contacts are provided by residues 124–132 (LASASVAQV) and Lys146. Asp281 serves as the catalytic Proton acceptor. 2 consecutive transmembrane segments (helical) span residues 501-521 (ITLLAFAGAIALAWPSLGEGI) and 530-550 (FGDIPTASYLLAAIGLSAWLL).

The protein belongs to the ABC1 family. UbiB subfamily.

The protein localises to the cell inner membrane. Its pathway is cofactor biosynthesis; ubiquinone biosynthesis [regulation]. Is probably a protein kinase regulator of UbiI activity which is involved in aerobic coenzyme Q (ubiquinone) biosynthesis. The polypeptide is Probable protein kinase UbiB (Cellvibrio japonicus (strain Ueda107) (Pseudomonas fluorescens subsp. cellulosa)).